The sequence spans 87 residues: Cell division topological specificity factor (87 aa).

The protein belongs to the MinE family.

In terms of biological role, prevents the cell division inhibition by proteins MinC and MinD at internal division sites while permitting inhibition at polar sites. This ensures cell division at the proper site by restricting the formation of a division septum at the midpoint of the long axis of the cell. The protein is Cell division topological specificity factor of Vibrio parahaemolyticus serotype O3:K6 (strain RIMD 2210633).